The primary structure comprises 682 residues: uncharacterized protein (682 aa).

This is an uncharacterized protein from Saccharomyces cerevisiae (strain ATCC 204508 / S288c) (Baker's yeast).